The chain runs to 520 residues: Legumin A2 (520 aa).

The N-terminal stretch at Met1–Ala22 is a signal peptide. 2 disulfides stabilise this stretch: Cys32–Cys65 and Cys108–Cys342. The 197-residue stretch at Leu37 to Asp233 folds into the Cupin type-1 1 domain. The disordered stretch occupies residues Val250–Glu339. In terms of domain architecture, Cupin type-1 2 spans Leu348 to Arg497.

The protein belongs to the 11S seed storage protein (globulins) family. As to quaternary structure, hexamer; each subunit is composed of an acidic and a basic chain derived from a single precursor and linked by a disulfide bond.

This protein found in the seeds of many leguminous and non-leguminous plants is the source of sulfur-containing amino acids in seed meals. The sequence is that of Legumin A2 (LEGA2) from Pisum sativum (Garden pea).